A 235-amino-acid polypeptide reads, in one-letter code: Aspartate/glutamate leucyltransferase (235 aa).

The protein belongs to the R-transferase family. Bpt subfamily.

It is found in the cytoplasm. It carries out the reaction N-terminal L-glutamyl-[protein] + L-leucyl-tRNA(Leu) = N-terminal L-leucyl-L-glutamyl-[protein] + tRNA(Leu) + H(+). The catalysed reaction is N-terminal L-aspartyl-[protein] + L-leucyl-tRNA(Leu) = N-terminal L-leucyl-L-aspartyl-[protein] + tRNA(Leu) + H(+). Functions in the N-end rule pathway of protein degradation where it conjugates Leu from its aminoacyl-tRNA to the N-termini of proteins containing an N-terminal aspartate or glutamate. The sequence is that of Aspartate/glutamate leucyltransferase from Pseudomonas entomophila (strain L48).